The primary structure comprises 174 residues: Large ribosomal subunit protein uL10 (174 aa).

Belongs to the universal ribosomal protein uL10 family. Part of the ribosomal stalk of the 50S ribosomal subunit. The N-terminus interacts with L11 and the large rRNA to form the base of the stalk. The C-terminus forms an elongated spine to which L12 dimers bind in a sequential fashion forming a multimeric L10(L12)X complex.

Functionally, forms part of the ribosomal stalk, playing a central role in the interaction of the ribosome with GTP-bound translation factors. The protein is Large ribosomal subunit protein uL10 of Pelobacter propionicus (strain DSM 2379 / NBRC 103807 / OttBd1).